Consider the following 35-residue polypeptide: PTEN upstream open reading frame MP31 (35 aa).

In terms of assembly, interacts with lactate dehydrogenases LDHA and LDHB; interaction with mitochondrial LDH leads to inhibition of lactate dehydrogenase activity, preventing conversion of lactate to pyruvate. As to expression, detected in brain, kidney and liver (at protein level).

The protein resides in the mitochondrion. Functionally, inhibits lactate dehydrogenase (LDH)-mediated conversion of lactate to pyruvate in mitochondria by competing with mitochondrial LDH for binding to NAD(+). Also inhibits cellular lactate utilization. The chain is PTEN upstream open reading frame MP31 from Mus musculus (Mouse).